Reading from the N-terminus, the 302-residue chain is Sulfate adenylyltransferase subunit 2 (302 aa).

This sequence belongs to the PAPS reductase family. CysD subfamily. In terms of assembly, heterodimer composed of CysD, the smaller subunit, and CysN.

It catalyses the reaction sulfate + ATP + H(+) = adenosine 5'-phosphosulfate + diphosphate. It functions in the pathway sulfur metabolism; hydrogen sulfide biosynthesis; sulfite from sulfate: step 1/3. In terms of biological role, with CysN forms the ATP sulfurylase (ATPS) that catalyzes the adenylation of sulfate producing adenosine 5'-phosphosulfate (APS) and diphosphate, the first enzymatic step in sulfur assimilation pathway. APS synthesis involves the formation of a high-energy phosphoric-sulfuric acid anhydride bond driven by GTP hydrolysis by CysN coupled to ATP hydrolysis by CysD. The chain is Sulfate adenylyltransferase subunit 2 from Baumannia cicadellinicola subsp. Homalodisca coagulata.